The primary structure comprises 660 residues: Putative ATP-dependent RNA helicase Pl10 (660 aa).

Acidic residues predominate over residues 1–11 (MSHVAEEDELG). The disordered stretch occupies residues 1 to 117 (MSHVAEEDEL…SRGGRSGFGK (117 aa)). An N-acetylserine modification is found at S2. Over residues 12–21 (LDQQLAGLDL) the composition is skewed to low complexity. The segment covering 24–34 (RDSQSGGSTAS) has biased composition (polar residues). A compositionally biased stretch (basic and acidic residues) spans 44–66 (RNREAAKAFYDKDGSRWSKDKDA). N6-acetyllysine is present on K55. Phosphoserine occurs at positions 80, 84, and 89. Residues 93 to 103 (GRFDERGRSDY) show a composition bias toward basic and acidic residues. R100 carries the omega-N-methylarginine modification. The residue at position 101 (S101) is a Phosphoserine. Y103 is modified (phosphotyrosine). R109 carries the post-translational modification Omega-N-methylarginine. K117 is subject to N6-acetyllysine. The Q motif signature appears at 179 to 207 (ESFSDVEMGEIIMGNIELTRYTRPTPVQK). S182 is subject to Phosphoserine. 199 to 206 (YTRPTPVQ) is an ATP binding site. The region spanning 210-402 (IPIIKEKRDL…RDFLDEYIFL (193 aa)) is the Helicase ATP-binding domain. K214 is covalently cross-linked (Glycyl lysine isopeptide (Lys-Gly) (interchain with G-Cter in SUMO2)). 223-230 (AQTGSGKT) contacts ATP. The DEAD box signature appears at 346–349 (DEAD). The 162-residue stretch at 413 to 574 (NITQKVVWVE…EVPSWLENMA (162 aa)) folds into the Helicase C-terminal domain. S455 is modified (phosphoserine). R590 carries the post-translational modification Omega-N-methylarginine. A phosphoserine mark is found at S592, S603, and S610. Positions 598 to 632 (RDYRQSSGASSSSFSSGRASNSRSGGGSHGSSRGF) are disordered. Positions 602-620 (QSSGASSSSFSSGRASNSR) are enriched in low complexity. Omega-N-methylarginine is present on residues R615 and R630. Residues 621 to 632 (SGGGSHGSSRGF) show a composition bias toward gly residues.

Belongs to the DEAD box helicase family. DDX3/DED1 subfamily. In terms of tissue distribution, testis.

It catalyses the reaction ATP + H2O = ADP + phosphate + H(+). In terms of biological role, putative ATP-dependent RNA helicase. Possible role in a key step of the spermatogenic process. The sequence is that of Putative ATP-dependent RNA helicase Pl10 (D1Pas1) from Mus musculus (Mouse).